The primary structure comprises 285 residues: Bifunctional protein FolD (285 aa).

Residues 166–168 (GAS) and Ile232 contribute to the NADP(+) site.

This sequence belongs to the tetrahydrofolate dehydrogenase/cyclohydrolase family. As to quaternary structure, homodimer.

It carries out the reaction (6R)-5,10-methylene-5,6,7,8-tetrahydrofolate + NADP(+) = (6R)-5,10-methenyltetrahydrofolate + NADPH. The enzyme catalyses (6R)-5,10-methenyltetrahydrofolate + H2O = (6R)-10-formyltetrahydrofolate + H(+). It functions in the pathway one-carbon metabolism; tetrahydrofolate interconversion. In terms of biological role, catalyzes the oxidation of 5,10-methylenetetrahydrofolate to 5,10-methenyltetrahydrofolate and then the hydrolysis of 5,10-methenyltetrahydrofolate to 10-formyltetrahydrofolate. The protein is Bifunctional protein FolD of Vibrio vulnificus (strain CMCP6).